A 1299-amino-acid chain; its full sequence is MDSLDHMLTDPLELGPCGDGHGTRIMEDCLLGGTRVSLPEDLLEDPEIFFDVVSLSTWQEVLSDSQREHLQQFLPQFPEDSAEQQNELILALFSGENFRFGNPLHIAQKLFRDGHFNPEVVKYRQLCFKSQYKRYLNSQQQYFHRLLKQILASRSDLLEMARRSGPALPFRQKRPSPSRTPEEREWRTQQRYLKVLREVKEECGDTALSSDEEDLSSWLPSSPARSPSPAVPLRVVPTLSTTDMKTADKVELGDSDLKIMLKKHHEKRKHQPDHPDLLTGDLTLNDIMTRVNAGRKGSLAALYDLAVLKKKVKEKEEKKKKKIKTIKSEAEDLAEPLSSTEGVAPLSQAPSPLAIPAIKEEPLEDLKPCLGINEISSSFFSLLLEILLLESQASLPMLEERVLDWQSSPASSLNSWFSAAPNWAELVLPALQYLAGESRAVPSSFSPFVEFKEKTQQWKLLGQSQDNEKELAALFQLWLETKDQAFCKQENEDSSDATTPVPRVRTDYVVRPSTGEEKRVFQEQERYRYSQPHKAFTFRMHGFESVVGPVKGVFDKETSLNKAREHSLLRSDRPAYVTILSLVRDAAARLPNGEGTRAEICELLKDSQFLAPDVTSTQVNTVVSGALDRLHYEKDPCVKYDIGRKLWIYLHRDRSEEEFERIHQAQAAAAKARKALQQKPKPPSKVKSSSKESSIKVLSSGPSEQSQMSLSDSSMPPTPVTPVTPTTPALPAIPISPPPVSAVNKSGPSTVSEPAKSSSGVLLVSSPTMPHLGTMLSPASSQTAPSSQAAARVVSHSGSAGLSQVRVVAQPSLPAVPQQSGGPAQTLPQMPAGPQIRVPATATQTKVVPQTVMATVPVKAQTTAATVQRPGPGQTGLTVTSLPATASPVSKPATSSPGTSAPSASTAAVIQNVTGQNIIKQVAITGQLGVKPQTGNSIPLTATNFRIQGKDVLRLPPSSITTDAKGQTVLRITPDMMATLAKSQVTTVKLTQDLFGTGGNTTGKGISATLHVTSNPVHAADSPAKASSASAPSSTPTGTTVVKVTPDLKPTEASSSAFRLMPALGVSVADQKGKSTVASSEAKPAATIRIVQGLGVMPPKAGQTITVATHAKQGASVASGSGTVHTSAVSLPSMNAAVSKTVAVASGAASTPISISTGAPTVRQVPVSTTVVSTSQAGKLPTRITVPLSVISQPMKGKSVVTAPIIKGNLGANLSGLGRNIILTTMPAGTKLIAGNKPVSFLTAQQLQQLQQQGQATQVRIQTVPASHLQQGTASGSSKAVSTVVVTTAPSPKQAPEQQ.

Residues 39-156 (PEDLLEDPEI…LKQILASRSD (118 aa)) enclose the DEUBAD domain. 2 disordered regions span residues 163-187 (RSGP…REWR) and 204-232 (GDTA…PAVP). Residues 216 to 232 (SSWLPSSPARSPSPAVP) are compositionally biased toward low complexity. A phosphoserine mark is found at S228 and S298. A Glycyl lysine isopeptide (Lys-Gly) (interchain with G-Cter in SUMO2) cross-link involves residue K327. A Phosphoserine modification is found at S351. The segment at 370-495 (LGINEISSSF…FCKQENEDSS (126 aa)) is winged-helix like domain. K469 participates in a covalent cross-link: Glycyl lysine isopeptide (Lys-Gly) (interchain with G-Cter in SUMO2). A Glycyl lysine isopeptide (Lys-Gly) (interchain with G-Cter in SUMO1); alternate cross-link involves residue K488. K488 participates in a covalent cross-link: Glycyl lysine isopeptide (Lys-Gly) (interchain with G-Cter in SUMO2); alternate. Disordered stretches follow at residues 669 to 760 (AAKA…SSSG), 882 to 902 (LPAT…TSAP), and 1017 to 1043 (VHAA…TVVK). Composition is skewed to low complexity over residues 677-688 (QQKPKPPSKVKS), 695-715 (IKVL…DSSM), and 723-733 (VTPTTPALPAI). A compositionally biased stretch (polar residues) spans 744 to 760 (NKSGPSTVSEPAKSSSG). Composition is skewed to low complexity over residues 892-902 (PATSSPGTSAP) and 1019-1043 (AADS…TVVK). At S1022 the chain carries Phosphoserine. K1237 bears the N6-acetyllysine mark. S1291 bears the Phosphoserine mark.

Belongs to the NFRKB family. Component of the chromatin remodeling INO80 complex; specifically part of a complex module associated with the N-terminus of INO80. Interacts with UCHL5; NFRKB competes with ADRM1 for interaction with UCHL5. As to expression, expressed in thymus, brain, testes, spleen and liver.

The protein resides in the nucleus. Binds to the DNA consensus sequence 5'-GGGGAATCTCC-3'. Functionally, putative regulatory component of the chromatin remodeling INO80 complex which is involved in transcriptional regulation, DNA replication and probably DNA repair. Modulates the deubiquitinase activity of UCHL5 in the INO80 complex. The sequence is that of Nuclear factor related to kappa-B-binding protein (NFRKB) from Homo sapiens (Human).